Here is a 225-residue protein sequence, read N- to C-terminus: Octanoyltransferase (225 aa).

Positions 29–210 (PDTDDEIWVV…RLIAHLDGAT (182 aa)) constitute a BPL/LPL catalytic domain. Residues 69 to 76 (RGGQITYH), 141 to 143 (ALG), and 154 to 156 (GLS) contribute to the substrate site. Cys172 serves as the catalytic Acyl-thioester intermediate.

Belongs to the LipB family.

The protein localises to the cytoplasm. It carries out the reaction octanoyl-[ACP] + L-lysyl-[protein] = N(6)-octanoyl-L-lysyl-[protein] + holo-[ACP] + H(+). The protein operates within protein modification; protein lipoylation via endogenous pathway; protein N(6)-(lipoyl)lysine from octanoyl-[acyl-carrier-protein]: step 1/2. Its function is as follows. Catalyzes the transfer of endogenously produced octanoic acid from octanoyl-acyl-carrier-protein onto the lipoyl domains of lipoate-dependent enzymes. Lipoyl-ACP can also act as a substrate although octanoyl-ACP is likely to be the physiological substrate. This is Octanoyltransferase from Burkholderia pseudomallei (strain K96243).